The chain runs to 248 residues: Transcription factor Spi-C (248 aa).

Residues 111 to 194 (LRLFEYLHES…IRRKLTYQFS (84 aa)) constitute a DNA-binding region (ETS).

This sequence belongs to the ETS family. In terms of assembly, binds DNA as a monomer.

The protein resides in the nucleus. In terms of biological role, controls the development of red pulp macrophages required for red blood cells recycling and iron homeostasis. Transcription factor that binds to the PU-box, a purine-rich DNA sequence (5'-GAGGA[AT]-3') that can act as a lymphoid-specific enhancer. Regulates VCAM1 gene expression. In Bos taurus (Bovine), this protein is Transcription factor Spi-C (SPIC).